A 201-amino-acid chain; its full sequence is Histone chaperone asf1a-A (201 aa).

The protein belongs to the ASF1 family. Interacts with histone H3 (including both histone H3.1 and H3.3) and histone H4. Interacts with hira and p60.

The protein resides in the nucleus. Its function is as follows. Histone chaperone that facilitates histone deposition and histone exchange and removal during nucleosome assembly and disassembly. Not critical for histone deposition during nucleosome assembly. This is Histone chaperone asf1a-A (asf1aa) from Xenopus laevis (African clawed frog).